The sequence spans 229 residues: Protein FAM3C (229 aa).

Residues 1–24 (MRIAGAIKFVVAVALFLLTFYVIS) form the signal peptide. 2 disulfide bridges follow: Cys59-Cys87 and Cys65-Cys222. The GG-type lectin domain occupies 68 to 226 (KHFAFKIASG…VEMEGCIPQK (159 aa)).

The protein belongs to the FAM3 family. In terms of tissue distribution, expressed in the retinal ganglion cell layer.

It is found in the secreted. Functionally, involved in retinal laminar formation. This Xenopus laevis (African clawed frog) protein is Protein FAM3C (fam3c).